Reading from the N-terminus, the 584-residue chain is Zinc finger and BTB domain-containing protein 7A (584 aa).

Residues 34 to 101 (CDVVILVEGR…AYTATLTVST (68 aa)) form the BTB domain. A disordered region spans residues 220–313 (YGPGPPAERP…EDGDGPDVDG (94 aa)). Positions 277-584 (EEEAASLSEA…TDGNFTAGLA (308 aa)) are mediates interaction with KHDRBS1. Low complexity predominate over residues 281–290 (ASLSEAAPEP). Ser337 and Ser341 each carry phosphoserine. Positions 349–584 (MDYYLKYFSG…TDGNFTAGLA (236 aa)) are mediates interaction with RELA. The tract at residues 377–584 (RAKAFQKCPI…TDGNFTAGLA (208 aa)) is mediates interaction with SMAD4. 2 consecutive C2H2-type zinc fingers follow at residues 382–404 (QKCP…IRTH) and 410–432 (YECN…MRKH). Residue Lys436 forms a Glycyl lysine isopeptide (Lys-Gly) (interchain with G-Cter in SUMO2) linkage. The segment at 438–460 (YLCQQCGAAFAHNYDLKNHMRVH) adopts a C2H2-type 3 zinc-finger fold. A C2H2-type 4; atypical zinc finger spans residues 466 to 490 (YQCDSCCKTFVRSDHLHRHLKKDGC). Residues 486 to 584 (KKDGCNGVPS…TDGNFTAGLA (99 aa)) are disordered. A compositionally biased stretch (low complexity) spans 505-527 (GGAPDPSPGATATPGAPAQPSSP). Phosphoserine is present on residues Ser511, Ser525, and Ser526. Positions 528-540 (DARRNGQEKHFKD) are enriched in basic and acidic residues. Residue Lys539 forms a Glycyl lysine isopeptide (Lys-Gly) (interchain with G-Cter in SUMO2) linkage. Residue Ser549 is modified to Phosphoserine. Residues 560–572 (GAGGGGDSGGGPG) show a composition bias toward gly residues.

In terms of assembly, homodimer. Interacts with BCL6. Interacts with RELA; involved in the control by RELA of the accessibility of target gene promoters. Interacts with AR (via NR LBD domain); the interaction is direct and androgen-dependent. Interacts with NCOR1. Interacts with NCOR2. Interacts with SMAD4; the interaction is direct and stimulated by TGFB1. Interacts with HDAC1. Interacts with SP1; ZBTB7A prevents the binding to GC-rich motifs in promoters and represses the transcriptional activity of SP1. Interacts with the DNA-dependent protein kinase complex/DNA-PKc. Interacts with KHDRBS1; negatively regulates KHDRBS1 splicing activity. In terms of processing, sumoylated. Undergoes sumoylation with SUMO1 that may regulate its transcriptional activity. Widely expressed. In normal thymus, expressed in medullary epithelial cells and Hassle's corpuscles (at protein level). In tonsil, expressed in squamous epithelium and germinal center lymphocytes (at protein level). Up-regulated in a subset of lymphomas, as well as in a subset of breast, lung, colon, prostate and bladder carcinomas (at protein level). Expressed in adipose tissues.

The protein resides in the nucleus. In terms of biological role, transcription factor that represses the transcription of a wide range of genes involved in cell proliferation and differentiation. Directly and specifically binds to the consensus sequence 5'-[GA][CA]GACCCCCCCCC-3' and represses transcription both by regulating the organization of chromatin and through the direct recruitment of transcription factors to gene regulatory regions. Negatively regulates SMAD4 transcriptional activity in the TGF-beta signaling pathway through these two mechanisms. That is, recruits the chromatin regulator HDAC1 to the SMAD4-DNA complex and in parallel prevents the recruitment of the transcriptional activators CREBBP and EP300. Collaborates with transcription factors like RELA to modify the accessibility of gene transcription regulatory regions to secondary transcription factors. Also directly interacts with transcription factors like SP1 to prevent their binding to DNA. Functions as an androgen receptor/AR transcriptional corepressor by recruiting NCOR1 and NCOR2 to the androgen response elements/ARE on target genes. Thereby, negatively regulates androgen receptor signaling and androgen-induced cell proliferation. Involved in the switch between fetal and adult globin expression during erythroid cells maturation. Through its interaction with the NuRD complex regulates chromatin at the fetal globin genes to repress their transcription. Specifically represses the transcription of the tumor suppressor ARF isoform from the CDKN2A gene. Efficiently abrogates E2F1-dependent CDKN2A transactivation. Regulates chondrogenesis through the transcriptional repression of specific genes via a mechanism that also requires histone deacetylation. Regulates cell proliferation through the transcriptional regulation of genes involved in glycolysis. Involved in adipogenesis through the regulation of genes involved in adipocyte differentiation. Plays a key role in the differentiation of lymphoid progenitors into B and T lineages. Promotes differentiation towards the B lineage by inhibiting the T-cell instructive Notch signaling pathway through the specific transcriptional repression of Notch downstream target genes. Also regulates osteoclast differentiation. May also play a role, independently of its transcriptional activity, in double-strand break repair via classical non-homologous end joining/cNHEJ. Recruited to double-strand break sites on damage DNA, interacts with the DNA-dependent protein kinase complex and directly regulates its stability and activity in DNA repair. May also modulate the splicing activity of KHDRBS1 toward BCL2L1 in a mechanism which is histone deacetylase-dependent and thereby negatively regulates the pro-apoptotic effect of KHDRBS1. The sequence is that of Zinc finger and BTB domain-containing protein 7A from Homo sapiens (Human).